The chain runs to 1057 residues: Carbamoyl phosphate synthase large chain (1057 aa).

Residues 1–401 form a carboxyphosphate synthetic domain region; that stretch reads MPKRNDIKTI…SLLKAIRSLE (401 aa). ATP-binding residues include Arg-129, Arg-169, Gly-175, Gly-176, Lys-208, Ile-210, Glu-215, Gly-241, Ile-242, His-243, Gln-284, and Glu-298. In terms of domain architecture, ATP-grasp 1 spans 133 to 327; the sequence is RNLMNELNEP…IAKLAAKIAV (195 aa). Residues Gln-284, Glu-298, and Asn-300 each contribute to the Mg(2+) site. Gln-284, Glu-298, and Asn-300 together coordinate Mn(2+). The segment at 402 to 546 is oligomerization domain; sequence YGVHHLGLPN…YGTYETENES (145 aa). The interval 547–929 is carbamoyl phosphate synthetic domain; it reads IRSDKKKVVV…ALYKGLVASG (383 aa). The ATP-grasp 2 domain occupies 671–861; it reads EALMQRIEIP…MANLAMKAIL (191 aa). Positions 707, 746, 748, 752, 777, 778, 779, 780, 820, and 832 each coordinate ATP. Residues Gln-820, Glu-832, and Asn-834 each coordinate Mg(2+). Mn(2+) is bound by residues Gln-820, Glu-832, and Asn-834. In terms of domain architecture, MGS-like spans 930–1057; it reads LQVKDHGTVL…ESMTFNMNQM (128 aa). Residues 930–1057 are allosteric domain; the sequence is LQVKDHGTVL…ESMTFNMNQM (128 aa).

This sequence belongs to the CarB family. In terms of assembly, composed of two chains; the small (or glutamine) chain promotes the hydrolysis of glutamine to ammonia, which is used by the large (or ammonia) chain to synthesize carbamoyl phosphate. Tetramer of heterodimers (alpha,beta)4. Mg(2+) serves as cofactor. Mn(2+) is required as a cofactor.

It carries out the reaction hydrogencarbonate + L-glutamine + 2 ATP + H2O = carbamoyl phosphate + L-glutamate + 2 ADP + phosphate + 2 H(+). It catalyses the reaction hydrogencarbonate + NH4(+) + 2 ATP = carbamoyl phosphate + 2 ADP + phosphate + 2 H(+). Its pathway is amino-acid biosynthesis; L-arginine biosynthesis; carbamoyl phosphate from bicarbonate: step 1/1. It functions in the pathway pyrimidine metabolism; UMP biosynthesis via de novo pathway; (S)-dihydroorotate from bicarbonate: step 1/3. Large subunit of the glutamine-dependent carbamoyl phosphate synthetase (CPSase). CPSase catalyzes the formation of carbamoyl phosphate from the ammonia moiety of glutamine, carbonate, and phosphate donated by ATP, constituting the first step of 2 biosynthetic pathways, one leading to arginine and/or urea and the other to pyrimidine nucleotides. The large subunit (synthetase) binds the substrates ammonia (free or transferred from glutamine from the small subunit), hydrogencarbonate and ATP and carries out an ATP-coupled ligase reaction, activating hydrogencarbonate by forming carboxy phosphate which reacts with ammonia to form carbamoyl phosphate. The protein is Carbamoyl phosphate synthase large chain of Macrococcus caseolyticus (strain JCSC5402) (Macrococcoides caseolyticum).